An 826-amino-acid chain; its full sequence is Zinc phosphodiesterase ELAC protein 2 (826 aa).

Residues 1 to 16 (MWALCSLLRSAAGRTM) constitute a mitochondrion transit peptide. 2 disordered regions span residues 16-51 (MSQGRTISQAPARRERPRKDPLRHLRTREKRGPSGC) and 188-231 (EQRR…VSQR). A compositionally biased stretch (basic and acidic residues) spans 27-38 (ARRERPRKDPLR). Phosphoserine is present on residues Ser199, Ser208, Ser212, Ser229, Ser618, and Ser736. Positions 208-224 (SPERSSDSESNENEPHL) are enriched in basic and acidic residues. The tract at residues 798 to 826 (ELAGGLEDGEPQQKRAHTEEPQAKKVRAQ) is disordered. A compositionally biased stretch (basic and acidic residues) spans 808 to 820 (PQQKRAHTEEPQA).

This sequence belongs to the RNase Z family. As to quaternary structure, homodimer. Interacts with PTCD1. The cofactor is Zn(2+).

It is found in the mitochondrion. The protein localises to the mitochondrion matrix. It localises to the mitochondrion nucleoid. The protein resides in the nucleus. It catalyses the reaction Endonucleolytic cleavage of RNA, removing extra 3' nucleotides from tRNA precursor, generating 3' termini of tRNAs. A 3'-hydroxy group is left at the tRNA terminus and a 5'-phosphoryl group is left at the trailer molecule.. Its function is as follows. Zinc phosphodiesterase, which displays mitochondrial tRNA 3'-processing endonuclease activity. Involved in tRNA maturation, by removing a 3'-trailer from precursor tRNA. Associates with mitochondrial DNA complexes at the nucleoids to initiate RNA processing and ribosome assembly. The protein is Zinc phosphodiesterase ELAC protein 2 (ELAC2) of Pan troglodytes (Chimpanzee).